The primary structure comprises 424 residues: 3-ketoacyl-CoA thiolase, peroxisomal (424 aa).

The N-terminal 26 residues, 1–26 (MQRLQVVLGHLRGPADSGWMPQAAPC), are a transit peptide targeting the peroxisome. A PTS2-type peroxisomal targeting signal region spans residues 1–26 (MQRLQVVLGHLRGPADSGWMPQAAPC). 2 positions are modified to phosphothreonine: Thr-59 and Thr-60. Cys-123 serves as the catalytic Acyl-thioester intermediate. Active-site proton acceptor residues include His-377 and Cys-408.

Belongs to the thiolase-like superfamily. Thiolase family. As to quaternary structure, homodimer. Interacts (via PTS2-type peroxisomal targeting signal region) with PEX7; leading to its translocation into peroxisomes.

The protein resides in the peroxisome. It carries out the reaction an acyl-CoA + acetyl-CoA = a 3-oxoacyl-CoA + CoA. The enzyme catalyses 2 acetyl-CoA = acetoacetyl-CoA + CoA. The catalysed reaction is tetradecanoyl-CoA + acetyl-CoA = 3-oxohexadecanoyl-CoA + CoA. It catalyses the reaction hexanoyl-CoA + acetyl-CoA = 3-oxooctanoyl-CoA + CoA. It carries out the reaction 3-oxohexadecanedioyl-CoA + CoA = tetradecanedioyl-CoA + acetyl-CoA. The enzyme catalyses 3-oxo-(6Z,9Z,12Z,15Z,18Z,21Z)-tetracosahexaenoyl-CoA + CoA = (4Z,7Z,10Z,13Z,16Z,19Z)-docosahexaenoyl-CoA + acetyl-CoA. It functions in the pathway lipid metabolism; peroxisomal fatty acid beta-oxidation. In terms of biological role, responsible for the thiolytic cleavage of straight chain 3-keto fatty acyl-CoAs (3-oxoacyl-CoAs). Plays an important role in fatty acid peroxisomal beta-oxidation. Catalyzes the cleavage of short, medium, long, and very long straight chain 3-oxoacyl-CoAs. The sequence is that of 3-ketoacyl-CoA thiolase, peroxisomal from Homo sapiens (Human).